The sequence spans 604 residues: Sulfite reductase [NADPH] flavoprotein alpha-component (604 aa).

A Flavodoxin-like domain is found at 65 to 203 (VTILYGSQTG…AAGQWHADVL (139 aa)). Residues 71–76 (SQTGNG), 118–121 (STHG), and 154–163 (LGDSSYEFFC) each bind FMN. Positions 236–453 (QNPYSAEVLV…VEPNKHFRLP (218 aa)) constitute an FAD-binding FR-type domain. Residues Thr324, Leu358, 392-395 (RLYS), 410-412 (TVA), and 425-428 (GGAS) each bind FAD. NADP(+)-binding positions include 524–525 (SR), 530–534 (KIYVQ), and Asp566. Residue Tyr604 participates in FAD binding.

The protein belongs to the NADPH-dependent sulphite reductase flavoprotein subunit CysJ family. In the N-terminal section; belongs to the flavodoxin family. It in the C-terminal section; belongs to the flavoprotein pyridine nucleotide cytochrome reductase family. As to quaternary structure, alpha(8)-beta(8). The alpha component is a flavoprotein, the beta component is a hemoprotein. FAD is required as a cofactor. Requires FMN as cofactor.

It catalyses the reaction hydrogen sulfide + 3 NADP(+) + 3 H2O = sulfite + 3 NADPH + 4 H(+). It participates in sulfur metabolism; hydrogen sulfide biosynthesis; hydrogen sulfide from sulfite (NADPH route): step 1/1. Its function is as follows. Component of the sulfite reductase complex that catalyzes the 6-electron reduction of sulfite to sulfide. This is one of several activities required for the biosynthesis of L-cysteine from sulfate. The flavoprotein component catalyzes the electron flow from NADPH -&gt; FAD -&gt; FMN to the hemoprotein component. The protein is Sulfite reductase [NADPH] flavoprotein alpha-component of Shewanella sp. (strain MR-4).